Consider the following 155-residue polypeptide: Large ribosomal subunit protein uL22c (155 aa).

It belongs to the universal ribosomal protein uL22 family. Part of the 50S ribosomal subunit.

The protein resides in the plastid. The protein localises to the chloroplast. In terms of biological role, this protein binds specifically to 23S rRNA. Functionally, the globular domain of the protein is located near the polypeptide exit tunnel on the outside of the subunit, while an extended beta-hairpin is found that lines the wall of the exit tunnel in the center of the 70S ribosome. This chain is Large ribosomal subunit protein uL22c (rpl22), found in Nicotiana tomentosiformis (Tobacco).